The chain runs to 375 residues: MVDQNRAFGWAANDESGVLSPFHFSRRENGENDVTVKILFCGVCHSDLHTIKNHWGFSRYPIIPGHEIVGIATKVGKNVTKFKEGDRVGVGVIIGSCQSCESCNQDLENYCPKVVFTYNSRSSDGTRNQGGYSDVIVVDHRFVLSIPDGLPSDSGAPLLCAGITVYSPMKYYGMTKESGKRLGVNGLGGLGHIAVKIGKAFGLRVTVISRSSEKEREAIDRLGADSFLVTTDSQKMKEAVGTMDFIIDTVSAEHALLPLFSLLKVSGKLVALGLLEKPLDLPIFPLVLGRKMVGGSQIGGMKETQEMLEFCAKHKIVSDIELIKMSDINSAMDRLVKSDVRYRFVIDVANSLLPESSAEILTEHVDHGVSITSRF.

Position 44 (Cys44) interacts with Zn(2+). Ser46 contributes to the NADP(+) binding site. His66, Glu67, Cys97, Cys100, Cys103, Cys111, and Cys160 together coordinate Zn(2+). NADP(+) contacts are provided by residues Thr164, 186–191, 209–214, Thr249, Gly273, and 296–298; these read GLGGLG, SRSSEK, and SQI.

The protein belongs to the zinc-containing alcohol dehydrogenase family. Homodimer. Zn(2+) is required as a cofactor. In terms of tissue distribution, expressed in the root tips. Expressed in the apical meristematic regions, leaf veins and at the base of the trichomes. Expressed at the base of the stems. Expressed in the abscission zones of newly formed siliques.

It carries out the reaction (E)-cinnamyl alcohol + NADP(+) = (E)-cinnamaldehyde + NADPH + H(+). The catalysed reaction is (E)-coniferol + NADP(+) = (E)-coniferaldehyde + NADPH + H(+). The enzyme catalyses (E)-sinapyl alcohol + NADP(+) = (E)-sinapaldehyde + NADPH + H(+). It catalyses the reaction (E)-4-coumaroyl alcohol + NADP(+) = (E)-4-coumaraldehyde + NADPH + H(+). It carries out the reaction (E)-caffeyl alcohol + NADP(+) = (E)-caffeyl aldehyde + NADPH + H(+). The protein operates within aromatic compound metabolism; phenylpropanoid biosynthesis. In terms of biological role, involved in lignin biosynthesis. Catalyzes the final step specific for the production of lignin monomers. Catalyzes the NADPH-dependent reduction of coniferaldehyde, 5-hydroxyconiferaldehyde, sinapaldehyde, 4-coumaraldehyde and caffeyl aldehyde to their respective alcohols. In Arabidopsis thaliana (Mouse-ear cress), this protein is Cinnamyl alcohol dehydrogenase 3.